We begin with the raw amino-acid sequence, 132 residues long: L-ectoine synthase (132 aa).

Belongs to the ectoine synthase family.

The catalysed reaction is (2S)-4-acetamido-2-aminobutanoate = L-ectoine + H2O. It functions in the pathway amine and polyamine biosynthesis; ectoine biosynthesis; L-ectoine from L-aspartate 4-semialdehyde: step 3/3. In terms of biological role, catalyzes the circularization of gamma-N-acetyl-alpha,gamma-diaminobutyric acid (ADABA) to ectoine (1,4,5,6-tetrahydro-2-methyl-4-pyrimidine carboxylic acid), which is an excellent osmoprotectant. The sequence is that of L-ectoine synthase from Bordetella avium (strain 197N).